Reading from the N-terminus, the 176-residue chain is uncharacterized protein (176 aa).

Its subcellular location is the host cytoplasm. This is an uncharacterized protein from Escherichia phage Mu (Bacteriophage Mu).